A 281-amino-acid chain; its full sequence is Ribosomal RNA small subunit methyltransferase A (281 aa).

Residues asparagine 36, leucine 38, glycine 63, glutamate 84, aspartate 109, and asparagine 127 each contribute to the S-adenosyl-L-methionine site.

It belongs to the class I-like SAM-binding methyltransferase superfamily. rRNA adenine N(6)-methyltransferase family. RsmA subfamily.

It is found in the cytoplasm. The catalysed reaction is adenosine(1518)/adenosine(1519) in 16S rRNA + 4 S-adenosyl-L-methionine = N(6)-dimethyladenosine(1518)/N(6)-dimethyladenosine(1519) in 16S rRNA + 4 S-adenosyl-L-homocysteine + 4 H(+). Its function is as follows. Specifically dimethylates two adjacent adenosines (A1518 and A1519) in the loop of a conserved hairpin near the 3'-end of 16S rRNA in the 30S particle. May play a critical role in biogenesis of 30S subunits. This Borrelia garinii subsp. bavariensis (strain ATCC BAA-2496 / DSM 23469 / PBi) (Borreliella bavariensis) protein is Ribosomal RNA small subunit methyltransferase A.